Consider the following 853-residue polypeptide: MSEKVDWLQSQNGVCKVDVYSPGDNQAQDWKMDTSTDPVRVLSWLRRDLEKSTAEFQDVRFKPGESFGGETSNSGDPHKGFSVDYYNTTTKGTPERLHFEMTHKEIPCQGPRAQLGNGSSVDEVSFYANRLTNLVIAMARKEINEKIDGSENKCVYQSLYMGNEPTPTKSLSKIASELVNETVSACSRNAAPDKAPGSGDRVSGSSQSPPNLKYKSTLKIKESTKERQGPDDKPPSKKSFFYKEVFESRNGDYAREGGRFFPRERKRFRGQERPDDFTASVSEGIMTYANSVVSDMMVSIMKTLKIQVKDTTIATILLKKVLLKHAKEVVSDLIDSFLRNLHSVTGTLMTDTQFVSAVKRTVFSHGSQKATDIMDAMLRKLYNVMFAKKVPEHVRKAQDKAESYSLISMKGMGDPKNRNVNFAMKSETKLREKMYSEPKSEEETCAKTLGEHIIKEGLTLWHKTQQKECKSLGFQHAAFEAPNTQRKPASDISFEYPEDIGNLSLPPYPPEKPENFMYDSDSWAEDLIVSALLLIQYHLAQGGRRDARSFVEAAGTTNFPANEPPVAPDESCLKSAPIVGDQEQAEKKDLRSVFFNFIRNLLSETIFKRDQSPEPKVPEQPVKEDRKLCERPLASSPPRLYEDDETPGALSGLTKMAVSQIDGHMSGQMVEHLMNSVMKLCVIIAKSCDASLAELGDDKSGDASRLTSAFPDSLYECLPAKGTGSAEAVLQNAYQAIHNEMRGTSGQPPEGCAAPTVIVSNHNLTDTVQNKQLQAVLQWVAASELNVPILYFAGDDEGIQEKLLQLSAAAVDKGCSVGEVLQSVLRYEKERQLNEAVGNVTPLQLLDWLMVNL.

The interval 124–137 (VSFYANRLTNLVIA) is PKA-RII subunit binding domain. Residues 188–240 (RNAAPDKAPGSGDRVSGSSQSPPNLKYKSTLKIKESTKERQGPDDKPPSKKSF) are disordered. Ser205 and Ser208 each carry phosphoserine. A compositionally biased stretch (basic and acidic residues) spans 219–235 (KIKESTKERQGPDDKPP). Ser403 carries the phosphoserine modification. The residue at position 404 (Tyr404) is a Phosphotyrosine. Phosphoserine is present on residues Ser635 and Ser636.

Belongs to the AKAP110 family. As to quaternary structure, interacts with ROPN1 and ROPN1L. Interacts with QRICH2. Phosphorylated by STK33 during sperm flagella assembly. Phosphorylated on tyrosine residues. Testis specific; only expressed in spermatids.

The protein resides in the cytoplasmic vesicle. The protein localises to the secretory vesicle. Its subcellular location is the acrosome. It is found in the cell projection. It localises to the cilium. The protein resides in the flagellum. In terms of biological role, structural component of sperm fibrous sheath. Required for the formation of the subcellular structure of the sperm flagellum, sperm motility and male fertility. This is A-kinase anchor protein 3 from Homo sapiens (Human).